Here is a 147-residue protein sequence, read N- to C-terminus: Hemoglobin subunit beta (147 aa).

V2 is subject to N-acetylvaline. One can recognise a Globin domain in the interval H3–H147. T13 bears the Phosphothreonine mark. S45 is modified (phosphoserine). K60 is subject to N6-acetyllysine. H64 contributes to the heme b binding site. K83 is subject to N6-acetyllysine. H93 contacts heme b. C94 bears the S-nitrosocysteine mark. N6-acetyllysine is present on K145.

Belongs to the globin family. As to quaternary structure, heterotetramer of two alpha chains and two beta chains. In terms of tissue distribution, red blood cells.

Involved in oxygen transport from the lung to the various peripheral tissues. The chain is Hemoglobin subunit beta (HBB) from Alouatta belzebul (Red-handed howler monkey).